Reading from the N-terminus, the 504-residue chain is Sphingosine-1-phosphate transporter SPNS2 (504 aa).

11 consecutive transmembrane segments (helical) span residues 48 to 70 (LLRC…LNYM), 94 to 114 (GLLQ…FGYL), 122 to 142 (IILS…SFIT), 182 to 202 (VMLS…YILG), 214 to 234 (WALR…LIFV), 269 to 289 (VFSS…GIWI), 317 to 337 (LIFG…GAVT), 351 to 371 (LVCA…FVVA), 375 to 395 (IVGA…NWAI), 415 to 435 (FQGF…IGLI), and 460 to 480 (LCPF…LFFL).

Belongs to the major facilitator superfamily. Spinster (TC 2.A.1.49) family.

It is found in the cell membrane. Its subcellular location is the endosome membrane. The enzyme catalyses sphing-4-enine 1-phosphate(in) = sphing-4-enine 1-phosphate(out). It catalyses the reaction sphinganine 1-phosphate(in) = sphinganine 1-phosphate(out). In terms of biological role, lipid transporter that specifically mediates export of sphingosine-1-phosphate (sphing-4-enine 1-phosphate, S1P) and sphinganine-1-phosphate, which play critical roles in regulating heart development. Mediates the export of S1P from cells in the extraembryonic yolk syncytial layer (YSL), thereby regulating myocardial precursor migration. This Danio rerio (Zebrafish) protein is Sphingosine-1-phosphate transporter SPNS2.